Here is a 479-residue protein sequence, read N- to C-terminus: mRNA export factor ICP27 homolog (479 aa).

The segment covering 1-15 (MVPSQRLSRTSSISS) has biased composition (low complexity). Disordered stretches follow at residues 1–77 (MVPS…PSSV) and 91–210 (KKWD…NKPW). The span at 35–44 (TDCDLDPMEG) shows a compositional bias: acidic residues. Residues 61–146 (DEDPTPAHAI…TDESYGKRRH (86 aa)) are nuclear export signal and interaction with host NXF1. The tract at residues 127-130 (KRRR) is nuclear localization signal. Residues 132–142 (EVHGCTDESYG) show a composition bias toward basic and acidic residues. The segment at 143–145 (KRR) is nuclear localization signal. Cysteine 354, histidine 445, cysteine 449, and cysteine 454 together coordinate Zn(2+). The CHC2-type zinc-finger motif lies at 354-454 (CFLPNTRDYN…HTRDCRSASC (101 aa)).

It belongs to the HHV-1 ICP27 protein family. As to quaternary structure, interacts with host XPO1 and with the XPO1 export pathway components small GTPase RAN and nucleoporin NUP214. Interacts with host SPEN, OTT1 and OTT3. Interacts with host SRSF1, SRSF3, SRSF7 and SRPK1. Interacts with host DHX9; this interaction may have an inhibitory effect on virion production. Interacts (via N-terminus) with host NXF1; this interaction plays a role in mRNA export. Post-translationally, phosphorylated by cellular protein kinase CK2.

It is found in the host nucleus. It localises to the host cytoplasm. Promotes the nuclear export of a subset of early and late viral mRNAs by interacting with mRNAs and cellular export proteins. Additionally may prevent the establishment of cellular antiviral state, by acting as an alternative splicing factor for cellular RNAs such as STAT1, resulting in a STAT1 mRNA incapable of producing the STAT1alpha isoform. The sequence is that of mRNA export factor ICP27 homolog from Homo sapiens (Human).